The following is a 68-amino-acid chain: ATP synthase F(0) complex subunit 8 (68 aa).

Residues 8–24 (TWSITIVSMIITLFIMF) form a helical membrane-spanning segment. Lys-54 is modified (N6-acetyllysine; alternate). Lys-54 bears the N6-succinyllysine; alternate mark. Lys-57 carries the N6-acetyllysine modification.

The protein belongs to the ATPase protein 8 family. In terms of assembly, component of the ATP synthase complex composed at least of ATP5F1A/subunit alpha, ATP5F1B/subunit beta, ATP5MC1/subunit c (homooctomer), MT-ATP6/subunit a, MT-ATP8/subunit 8, ATP5ME/subunit e, ATP5MF/subunit f, ATP5MG/subunit g, ATP5MK/subunit k, ATP5MJ/subunit j, ATP5F1C/subunit gamma, ATP5F1D/subunit delta, ATP5F1E/subunit epsilon, ATP5PF/subunit F6, ATP5PB/subunit b, ATP5PD/subunit d, ATP5PO/subunit OSCP. ATP synthase complex consists of a soluble F(1) head domain (subunits alpha(3) and beta(3)) - the catalytic core - and a membrane F(0) domain - the membrane proton channel (subunits c, a, 8, e, f, g, k and j). These two domains are linked by a central stalk (subunits gamma, delta, and epsilon) rotating inside the F1 region and a stationary peripheral stalk (subunits F6, b, d, and OSCP). Interacts with PRICKLE3.

It localises to the mitochondrion membrane. Subunit 8, of the mitochondrial membrane ATP synthase complex (F(1)F(0) ATP synthase or Complex V) that produces ATP from ADP in the presence of a proton gradient across the membrane which is generated by electron transport complexes of the respiratory chain. ATP synthase complex consist of a soluble F(1) head domain - the catalytic core - and a membrane F(1) domain - the membrane proton channel. These two domains are linked by a central stalk rotating inside the F(1) region and a stationary peripheral stalk. During catalysis, ATP synthesis in the catalytic domain of F(1) is coupled via a rotary mechanism of the central stalk subunits to proton translocation. In vivo, can only synthesize ATP although its ATP hydrolase activity can be activated artificially in vitro. Part of the complex F(0) domain. This is ATP synthase F(0) complex subunit 8 from Ceratotherium simum (White rhinoceros).